A 115-amino-acid polypeptide reads, in one-letter code: MNPLIQSLTEGQLRSDIPNFRPGDTVRVHAKVVEGTRERIQIFEGVVISRKGQGISEMYTVRKISGGIGVERTFPIHTPRVDKIEVIRHGKVRRAKLYYLRALQGKAARIKEIRR.

It belongs to the bacterial ribosomal protein bL19 family.

Its function is as follows. This protein is located at the 30S-50S ribosomal subunit interface and may play a role in the structure and function of the aminoacyl-tRNA binding site. The protein is Large ribosomal subunit protein bL19 of Streptococcus pyogenes serotype M1.